Consider the following 199-residue polypeptide: Nuclear protein UL4 (199 aa).

This sequence belongs to the alphaherpesvirinae HHV-1 UL4 family.

It is found in the host nucleus. This Homo sapiens (Human) protein is Nuclear protein UL4.